A 702-amino-acid chain; its full sequence is Choline transporter-like protein 5-A (702 aa).

Residues Val21–Ala41 form a helical membrane-spanning segment. Over Trp42 to Trp225 the chain is Extracellular. Asn120, Asn173, and Asn180 each carry an N-linked (GlcNAc...) asparagine glycan. A helical membrane pass occupies residues Tyr226–Leu246. The Cytoplasmic segment spans residues Arg247–Thr249. Residues Ala250–Trp270 form a helical membrane-spanning segment. Residues His271–Trp308 are Extracellular-facing. Residues Leu309 to Leu329 form a helical membrane-spanning segment. The Cytoplasmic portion of the chain corresponds to Arg330–Arg334. A helical transmembrane segment spans residues Ile335 to Phe355. Topologically, residues Tyr356–Pro357 are extracellular. A helical transmembrane segment spans residues Ile358–Leu378. Topologically, residues Ala379–Asn443 are cytoplasmic. Residues Leu444–Gly464 traverse the membrane as a helical segment. Topologically, residues Ala465–Ser498 are extracellular. A helical membrane pass occupies residues Leu499–Leu519. The Cytoplasmic portion of the chain corresponds to Asp520 to Asp593. A helical transmembrane segment spans residues Phe594 to Leu614. At Phe615 to Tyr632 the chain is on the extracellular side. Residues Cys633–Val653 traverse the membrane as a helical segment. Over Tyr654–Lys699 the chain is Cytoplasmic.

It belongs to the CTL (choline transporter-like) family.

The protein resides in the cell membrane. It catalyses the reaction choline(out) + n H(+)(in) = choline(in) + n H(+)(out). Its function is as follows. Choline/H+ antiporter. The chain is Choline transporter-like protein 5-A (slc44a5a) from Danio rerio (Zebrafish).